We begin with the raw amino-acid sequence, 382 residues long: tRNA-specific 2-thiouridylase MnmA (382 aa).

ATP-binding positions include 34 to 41 and leucine 60; that span reads AMSGGVDS. The Nucleophile role is filled by cysteine 128. Cysteine 128 and cysteine 224 are disulfide-bonded. Glycine 152 lines the ATP pocket. An interaction with tRNA region spans residues 174–176; it reads RDQ. Residue cysteine 224 is the Cysteine persulfide intermediate of the active site.

This sequence belongs to the MnmA/TRMU family.

Its subcellular location is the cytoplasm. The catalysed reaction is S-sulfanyl-L-cysteinyl-[protein] + uridine(34) in tRNA + AH2 + ATP = 2-thiouridine(34) in tRNA + L-cysteinyl-[protein] + A + AMP + diphosphate + H(+). Its function is as follows. Catalyzes the 2-thiolation of uridine at the wobble position (U34) of tRNA, leading to the formation of s(2)U34. This Sphingopyxis alaskensis (strain DSM 13593 / LMG 18877 / RB2256) (Sphingomonas alaskensis) protein is tRNA-specific 2-thiouridylase MnmA.